The sequence spans 273 residues: DNA repair protein RecO (273 aa).

The tract at residues 249–273 (GRSLTEEPELKAEQTEAEKESQRPR) is disordered. Residues 252–273 (LTEEPELKAEQTEAEKESQRPR) show a composition bias toward basic and acidic residues.

The protein belongs to the RecO family.

Functionally, involved in DNA repair and RecF pathway recombination. The protein is DNA repair protein RecO of Heliobacterium modesticaldum (strain ATCC 51547 / Ice1).